A 711-amino-acid polypeptide reads, in one-letter code: T-box transcription factor TBX2 (711 aa).

Residues 109-287 constitute a DNA-binding region (T-box); sequence LEAKELWDQF…NNPFAKGFRD (179 aa). The interval 313 to 449 is disordered; it reads PERDGAESDA…GEGKEPSLAP (137 aa). A compositionally biased stretch (pro residues) spans 326-340; it reads DPPPAREPPPSPSAA. 3 positions are modified to phosphoserine: S336, S342, and S360. 3 stretches are compositionally biased toward basic and acidic residues: residues 363-372, 390-409, and 421-444; these read EPERTGEERS, TEPE…KEPT, and SLEK…EGKE. Positions 518–602 are repression domain 1 (RD1); it reads GSGSSGGAGP…ATSAAAAAAA (85 aa). Phosphoserine is present on residues S623, S652, S656, and S675. The segment at 640 to 687 is disordered; sequence TGLAAEGSKGGNSREPSPLPELALRKVGGPSRGALSPSGSAKEAASEL.

Binds DNA as a monomer. Interacts with CHD4, HDAC1 and HDAC2, perhaps as components of a NuRD-like complex. Interacts with CBX3, HMGB2 and PBX1. Interacts with PML. Phosphorylated. May be phosphorylated by p38 MAPK in response to UV irradiation stress. In terms of tissue distribution, in adults, highest levels in lung. Also found in heart, kidney, and ovary.

Its subcellular location is the nucleus. Its function is as follows. Transcription factor which acts as a transcriptional repressor. May also function as a transcriptional activator. Binds to the palindromic T site 5'-TTCACACCTAGGTGTGAA-3' DNA sequence, or a half-site, which are present in the regulatory region of several genes. Required for cardiac atrioventricular canal formation. May cooperate with NKX2.5 to negatively modulate expression of NPPA/ANF in the atrioventricular canal. May play a role as a positive regulator of TGFB2 expression, perhaps acting in concert with GATA4 in the developing outflow tract myocardium. Plays a role in limb pattern formation. Acts as a transcriptional repressor of ADAM10 gene expression, perhaps in concert with histone deacetylase HDAC1 as cofactor. Involved in branching morphogenesis in both developing lungs and adult mammary glands, via negative modulation of target genes; acting redundantly with TBX3. Required, together with TBX3, to maintain cell proliferation in the embryonic lung mesenchyme; perhaps acting downstream of SHH, BMP and TGFbeta signaling. Involved in modulating early inner ear development, acting independently of, and also redundantly with TBX3, in different subregions of the developing ear. Acts as a negative regulator of PML function in cellular senescence. Acts as a negative regulator of expression of CDKN1A/p21, IL33 and CCN4; repression of CDKN1A is enhanced in response to UV-induced stress, perhaps as a result of phosphorylation by p38 MAPK. Negatively modulates expression of CDKN2A/p19ARF and CDH1/E-cadherin. Plays a role in induction of the epithelial-mesenchymal transition (EMT). Plays a role in melanocyte proliferation, perhaps via regulation of cyclin CCND1. Involved in melanogenesis, acting via negative modulation of expression of DHICA oxidase/TYRP1 and P protein/OCA2. Involved in regulating retinal pigment epithelium (RPE) cell proliferation, perhaps via negatively modulating transcription of the transcription factor CEBPD. The chain is T-box transcription factor TBX2 (Tbx2) from Mus musculus (Mouse).